The following is a 378-amino-acid chain: Glutamate 5-kinase (378 aa).

Lys-19 is a binding site for ATP. Substrate is bound by residues Ser-59, Asp-146, and Asn-158. ATP is bound by residues 178–179 (TD) and 220–226 (TGGMATK). The PUA domain occupies 285–363 (QGQIQVDAGA…GEIGEILGYK (79 aa)).

Belongs to the glutamate 5-kinase family.

It localises to the cytoplasm. The enzyme catalyses L-glutamate + ATP = L-glutamyl 5-phosphate + ADP. The protein operates within amino-acid biosynthesis; L-proline biosynthesis; L-glutamate 5-semialdehyde from L-glutamate: step 1/2. Its function is as follows. Catalyzes the transfer of a phosphate group to glutamate to form L-glutamate 5-phosphate. This is Glutamate 5-kinase from Moorella thermoacetica (strain ATCC 39073 / JCM 9320).